A 354-amino-acid polypeptide reads, in one-letter code: Peptide chain release factor 1 (354 aa).

N5-methylglutamine is present on glutamine 230. The segment at 282 to 301 (KQASDAIKKQMIGSGDRSER) is disordered.

The protein belongs to the prokaryotic/mitochondrial release factor family. Methylated by PrmC. Methylation increases the termination efficiency of RF1.

The protein resides in the cytoplasm. Its function is as follows. Peptide chain release factor 1 directs the termination of translation in response to the peptide chain termination codons UAG and UAA. The sequence is that of Peptide chain release factor 1 from Leptospira borgpetersenii serovar Hardjo-bovis (strain L550).